The following is a 106-amino-acid chain: ATP-dependent Clp protease adapter protein ClpS (106 aa).

The protein belongs to the ClpS family. In terms of assembly, binds to the N-terminal domain of the chaperone ClpA.

In terms of biological role, involved in the modulation of the specificity of the ClpAP-mediated ATP-dependent protein degradation. The chain is ATP-dependent Clp protease adapter protein ClpS from Serratia proteamaculans (strain 568).